We begin with the raw amino-acid sequence, 133 residues long: Large ribosomal subunit protein eL19 (133 aa).

Residues 55-83 (RGISGARKKPRRKGPGSRKGGKYSKLPRK) form a disordered region. A compositionally biased stretch (basic residues) spans 60–83 (ARKKPRRKGPGSRKGGKYSKLPRK).

The protein belongs to the eukaryotic ribosomal protein eL19 family. In terms of assembly, part of the 50S ribosomal subunit.

Binds to the 23S rRNA. The protein is Large ribosomal subunit protein eL19 of Korarchaeum cryptofilum (strain OPF8).